The chain runs to 1284 residues: Zinc finger protein 423 (1284 aa).

Disordered regions lie at residues 1-64 and 87-117; these read MHKK…MEDE and AHRC…SPTQ. Residues 34 to 46 are compositionally biased toward basic and acidic residues; that stretch reads CDQKTSRALEDRN. A phosphoserine mark is found at S47 and S50. Positions 54-64 are enriched in acidic residues; that stretch reads RNEDDEDMEDE. A C2H2-type 1; degenerate zinc finger spans residues 67–93; that stretch reads YTCDHCQQDFESLADLTDHRAHRCPGD. Over residues 102-117 the composition is skewed to polar residues; the sequence is WVASSPSSKDVASPTQ. 7 C2H2-type zinc fingers span residues 138–160, 166–188, 194–216, 222–244, 263–286, 295–318, and 323–345; these read YPCQ…EQIH, FKCT…IKLH, YHCH…LKTH, FKCT…MQAH, FMCD…LTRH, LQCI…HQAH, and HKCP…LDSH. Residues 346-398 are disordered; sequence RQPDSSNHSVSPDPVLGSVASMSSATPDSSASVERGSTPDSTLKPLRGQKKMR. The segment covering 363 to 377 has biased composition (low complexity); sequence SVASMSSATPDSSAS. The C2H2-type 9; degenerate zinc-finger motif lies at 409–433; that stretch reads YSCPYCSKRDFNSLAVLEIHLKTIH. 3 consecutive C2H2-type zinc fingers follow at residues 441 to 464, 480 to 503, and 517 to 540; these read HTCQ…RKLH, FHCN…RVSH, and FFCN…QQAH. A C2H2-type 13; atypical zinc finger spans residues 563-588; the sequence is YSCPYCTNSPIFGSILKLTKHIKENH. Positions 590 to 624 are disordered; it reads NIPLAHSKKSKAEQSPVSSDVEVSSPKRQRLSASA. Phosphoserine is present on S604. Over residues 604–615 the composition is skewed to low complexity; sequence SPVSSDVEVSSP. C2H2-type zinc fingers lie at residues 632-654, 662-684, 692-715, 720-743, 750-773, 781-803, and 807-830; these read YPCN…LKLH, QACP…LTVH, YVCE…LDMH, YHCT…AVKH, YRCT…KHSH, HKCI…ITTH, and YNCK…REKH. The C2H2-type 21; degenerate zinc-finger motif lies at 886–908; it reads YGCDICGAAYTMEVLLQNHRLRD. 3 consecutive C2H2-type zinc fingers follow at residues 930 to 952, 959 to 981, and 1020 to 1042; these read HKCN…LQTH, YMCP…KVTH, and FRCV…GTFH. A Phosphoserine modification is found at S1054. The segment at 1064–1082 adopts a C2H2-type 25; degenerate zinc-finger fold; it reads YKCALCLKEFRSKQDLVKL. 5 C2H2-type zinc fingers span residues 1120–1143, 1168–1190, 1198–1220, 1229–1252, and 1259–1282; these read LRCP…QVDH, YQCI…VANH, HECK…LIEH, FKCP…FAVH, and YDCS…MSQH. A compositionally biased stretch (basic and acidic residues) spans 1136-1147; that stretch reads ESHMQVDHRDLT. Residues 1136–1163 are disordered; that stretch reads ESHMQVDHRDLTPETSGPRKGTQTSPVP.

Belongs to the krueppel C2H2-type zinc-finger protein family. As to quaternary structure, homodimer. Interacts with EBF1. Interacts with SMAD1 and SMAD4. Interacts with PARP1. Interacts with CEP290. Expressed in brain, lung, skeletal muscle, heart, pancreas and kidney but not liver or placenta. Also expressed in aorta, ovary, pituitary, small intestine, fetal brain, fetal kidney and, within the adult brain, in the substantia nigra, medulla, amygdala, thalamus and cerebellum.

Its subcellular location is the nucleus. Functionally, transcription factor that can both act as an activator or a repressor depending on the context. Plays a central role in BMP signaling and olfactory neurogenesis. Associates with SMADs in response to BMP2 leading to activate transcription of BMP target genes. Acts as a transcriptional repressor via its interaction with EBF1, a transcription factor involved in terminal olfactory receptor neurons differentiation; this interaction preventing EBF1 to bind DNA and activate olfactory-specific genes. Involved in olfactory neurogenesis by participating in a developmental switch that regulates the transition from differentiation to maturation in olfactory receptor neurons. Controls proliferation and differentiation of neural precursors in cerebellar vermis formation. The polypeptide is Zinc finger protein 423 (ZNF423) (Homo sapiens (Human)).